The following is a 322-amino-acid chain: 4-hydroxythreonine-4-phosphate dehydrogenase (322 aa).

The substrate site is built by H126 and T127. H160, H205, and H260 together coordinate a divalent metal cation. K268, N277, and R286 together coordinate substrate.

The protein belongs to the PdxA family. In terms of assembly, homodimer. It depends on Zn(2+) as a cofactor. The cofactor is Mg(2+). Co(2+) serves as cofactor.

Its subcellular location is the cytoplasm. The enzyme catalyses 4-(phosphooxy)-L-threonine + NAD(+) = 3-amino-2-oxopropyl phosphate + CO2 + NADH. It participates in cofactor biosynthesis; pyridoxine 5'-phosphate biosynthesis; pyridoxine 5'-phosphate from D-erythrose 4-phosphate: step 4/5. Catalyzes the NAD(P)-dependent oxidation of 4-(phosphooxy)-L-threonine (HTP) into 2-amino-3-oxo-4-(phosphooxy)butyric acid which spontaneously decarboxylates to form 3-amino-2-oxopropyl phosphate (AHAP). This is 4-hydroxythreonine-4-phosphate dehydrogenase from Paracoccus denitrificans (strain Pd 1222).